The chain runs to 102 residues: Small ribosomal subunit protein uS10 (102 aa).

It belongs to the universal ribosomal protein uS10 family. Part of the 30S ribosomal subunit.

In terms of biological role, involved in the binding of tRNA to the ribosomes. The polypeptide is Small ribosomal subunit protein uS10 (Lactococcus lactis subsp. lactis (strain IL1403) (Streptococcus lactis)).